A 458-amino-acid polypeptide reads, in one-letter code: Elongation factor 1-alpha (458 aa).

G2 bears the N,N,N-trimethylglycine mark. K3 bears the N6,N6-dimethyllysine; alternate mark. K3 is modified (N6-methyllysine; alternate). One can recognise a tr-type G domain in the interval 5 to 240 (KTHVNVVVIG…DAIEPPQRPT (236 aa)). Residues 14-21 (GHVDSGKS) form a G1 region. Residue 14 to 21 (GHVDSGKS) participates in GTP binding. Residue K30 is modified to N6-methyllysine. Positions 70–74 (GITID) are G2. Residue K79 is modified to N6,N6,N6-trimethyllysine. Residues 91–94 (DAPG) are G3. Residues 91–95 (DAPGH) and 153–156 (NKMD) each bind GTP. The interval 153–156 (NKMD) is G4. Residues 192–194 (SGW) are G5. The residue at position 316 (K316) is an N6,N6-dimethyllysine; alternate. Position 316 is an N6-methyllysine; alternate (K316). K390 carries the post-translational modification N6-methyllysine.

It belongs to the TRAFAC class translation factor GTPase superfamily. Classic translation factor GTPase family. EF-Tu/EF-1A subfamily.

It is found in the cytoplasm. It participates in protein biosynthesis; polypeptide chain elongation. In terms of biological role, this protein promotes the GTP-dependent binding of aminoacyl-tRNA to the A-site of ribosomes during protein biosynthesis. The protein is Elongation factor 1-alpha (TEF1) of Meyerozyma guilliermondii (strain ATCC 6260 / CBS 566 / DSM 6381 / JCM 1539 / NBRC 10279 / NRRL Y-324) (Yeast).